A 474-amino-acid polypeptide reads, in one-letter code: Isoflavone 7-O-glucosyltransferase 1 (474 aa).

A propeptide spans 1-49 (MKDTIVLYPNLGRGHLVSMVELGKLILTHHPSLSITILILTPPTTPSTT) (removed in mature form). The Proton acceptor role is filled by His-15. An an anthocyanidin-binding site is contributed by His-15. Asp-125 (charge relay) is an active-site residue. UDP-alpha-D-glucose-binding residues include Thr-150, Ala-351, Gln-353, His-368, Trp-371, Asn-372, Ser-373, and Glu-376. Ala-391 is a binding site for an anthocyanidin. Glu-392 and Gln-393 together coordinate UDP-alpha-D-glucose.

This sequence belongs to the UDP-glycosyltransferase family. In terms of assembly, monomer. As to expression, expressed in shoots, leaves, cotyledons, epicotyls, hypocotyls, roots, pods, seeds and flowers.

It catalyses the reaction a 7-hydroxyisoflavone + UDP-alpha-D-glucose = a 7-hydroxyisoflavone 7-O-beta-D-glucoside + UDP + H(+). Functionally, involved in the biosynthesis of isoflavonoids. Specific for UDP-glucose. Can use genistein &gt; daidzein &gt; formononetin &gt; quercetin &gt; kaempferol &gt; 4,2',4',6'-tetrahydroxychalcone &gt; apigenin &gt; aureusidin &gt; esculetin &gt; naringenin as substrates, but not cyanidin, trans-p-coumaric acid, caffeic acid, benzoic acid, m- and p-hydroxybenzoic acids, salicylic acid, salicyl alcohol, and hydroquinone. The polypeptide is Isoflavone 7-O-glucosyltransferase 1 (GmIF7GT1) (Glycine max (Soybean)).